A 326-amino-acid chain; its full sequence is Metal-binding protein YtgA (326 aa).

The first 21 residues, 1–21, serve as a signal peptide directing secretion; sequence MFFLHVRKYKHVIGGLLCLAG. His75, His141, His207, and Asp299 together coordinate Fe(2+).

It belongs to the bacterial solute-binding protein 9 family. Monomer.

Its subcellular location is the periplasm. Its function is as follows. Part of the ATP-binding cassette (ABC) transport system YtgABCD involved in metal import. Binds Fe(2+), Mn(2+) and Ni(2+), with a preference for Fe(2+) and delivers them to the membrane permease for translocation into the cytoplasm. The protein is Metal-binding protein YtgA of Chlamydia muridarum (strain MoPn / Nigg).